We begin with the raw amino-acid sequence, 510 residues long: Inositol-3-phosphate synthase isozyme 2 (510 aa).

This sequence belongs to the myo-inositol 1-phosphate synthase family. The cofactor is NAD(+). In terms of tissue distribution, expressed in siliques, leaves, roots, seed endosperm, but not in embryos. Highest expression in seeds. In leaves, only expressed in hydathodes and vascular tissue.

The protein localises to the cytoplasm. The catalysed reaction is D-glucose 6-phosphate = 1D-myo-inositol 3-phosphate. It functions in the pathway polyol metabolism; myo-inositol biosynthesis; myo-inositol from D-glucose 6-phosphate: step 1/2. Its function is as follows. Key enzyme in myo-inositol biosynthesis pathway that catalyzes the conversion of glucose 6-phosphate to 1-myo-inositol 1-phosphate in a NAD-dependent manner. The protein is Inositol-3-phosphate synthase isozyme 2 (IPS2) of Arabidopsis thaliana (Mouse-ear cress).